Reading from the N-terminus, the 496-residue chain is Nectin 1a (496 aa).

A signal peptide spans 1–20 (MMFINLLLRLMCVFLIGADG). Over 21–349 (QMVQMESSKA…FQDQQQAGVV (329 aa)) the chain is Extracellular. The Ig-like V-type domain occupies 34–138 (GSQVELPCQF…GNRENMVNLT (105 aa)). Cys41 and Cys121 form a disulfide bridge. Residues Asn62 and Asn136 are each glycosylated (N-linked (GlcNAc...) asparagine). Ig-like C2-type domains follow at residues 143-238 (PMIQ…VTLN) and 243-330 (PEVI…VIVT). 2 disulfide bridges follow: Cys168-Cys222 and Cys265-Cys312. Asn282 carries N-linked (GlcNAc...) asparagine glycosylation. Residues 350–370 (IGGAVVCGTVLLAAVTLLVVF) traverse the membrane as a helical segment. The Cytoplasmic segment spans residues 371–496 (LYRRRCMFKG…SVISKEEWYV (126 aa)).

This sequence belongs to the nectin family. In terms of assembly, cis- and trans-homodimer. Can form trans-heterodimers. Expressed in the developing eye and nervous system.

It localises to the cell membrane. Its subcellular location is the cell junction. The protein resides in the adherens junction. In terms of biological role, cell adhesion molecule that promotes cell-cell contacts and plays important roles in the development of the nervous system. Acts by forming homophilic or heterophilic trans-dimers. The protein is Nectin 1a of Danio rerio (Zebrafish).